The following is a 187-amino-acid chain: Biphenyl 2,3-dioxygenase subunit beta (187 aa).

The protein belongs to the bacterial ring-hydroxylating dioxygenase beta subunit family. As to quaternary structure, heterohexamer consisting of three BphA1 subunits and three BphA2 subunits. The multicomponent biphenyl dioxygenase system is composed of a ferredoxin reductase (BphA4), a ferredoxin (BphA3), and a terminal oxygenase (BphA1A2).

The catalysed reaction is biphenyl + NADH + O2 + H(+) = (2R,3S)-3-phenylcyclohexa-3,5-diene-1,2-diol + NAD(+). Its pathway is xenobiotic degradation; biphenyl degradation; 2-hydroxy-2,4-pentadienoate and benzoate from biphenyl: step 1/4. Functionally, part of the oxygenase component of the biphenyl dioxygenase system that catalyzes the stereospecific dihydroxylation of the aromatic ring of biphenyl, yielding a dihydrodiol compound. Is likely involved in biphenyl degradation that allows growth of Rhodococcus sp. strain RHA1 on biphenyl as the sole source of carbon and energy. Can also use naphtalene and 4-chlorobiphenyl (4-CB) as substrates, as well as some polychlorinated biphenyls (PCB) such as 2,2'-dichlorobiphenyl, 2,3-dichlorobiphenyl and 2,5,2'-trichlorobiphenyl. Exhibits weak activity toward dibenzofuran and dibenzo-p-dioxin. Electrons are transferred from NADH to the [2Fe-2S] cluster in BphA1 via FAD of BphA4 and [2Fe-2S] cluster of BphA3. The protein is Biphenyl 2,3-dioxygenase subunit beta of Rhodococcus jostii (strain RHA1).